The following is a 389-amino-acid chain: Inner membrane transport protein YdhP (389 aa).

The Cytoplasmic portion of the chain corresponds to 1 to 6 (MKINYP). Residues 7 to 27 (LLALAIGAFGIGTTEFSPMGL) traverse the membrane as a helical segment. Residues 28–43 (LPVIARGVDVSIPAAG) lie on the Periplasmic side of the membrane. Residues 44–64 (MLISAYAVGVMVGAPLMTLLL) form a helical membrane-spanning segment. The Cytoplasmic segment spans residues 65-70 (SHRARR). Residues 71-91 (SALIFLMAIFTLGNVLSAIAP) traverse the membrane as a helical segment. Topologically, residues 92 to 100 (DYMTLMLSR) are periplasmic. Residues 101-121 (ILTSLNHGAFFGLGSVVAASV) form a helical membrane-spanning segment. Over 122–130 (VPKHKQASA) the chain is Cytoplasmic. Residues 131-151 (VATMFMGLTLANIGGVPAATW) traverse the membrane as a helical segment. Topologically, residues 152 to 159 (LGETIGWR) are periplasmic. Residues 160–180 (MSFLATAGLGVISMVSLFFSL) form a helical membrane-spanning segment. Residues 181-203 (PKGGAGARPEVKKELAVLMRPQV) are Cytoplasmic-facing. Residues 204-224 (LSALLTTVLGAGAMFTLYTYI) traverse the membrane as a helical segment. The Periplasmic portion of the chain corresponds to 225–236 (SPVLQSITHATP). The helical transmembrane segment at 237–257 (VFVTAMLVLIGVGFSIGNYLG) threads the bilayer. The Cytoplasmic portion of the chain corresponds to 258–266 (GKLADRSVN). Residues 267–287 (GTLKGFLLLLMVIMLAIPFLA) traverse the membrane as a helical segment. At 288 to 290 (RNK) the chain is on the periplasmic side. A helical membrane pass occupies residues 291-311 (FGAAISMAVWGAATFAVVPPL). Residues 312-330 (QMRVMRVASEAPGLSSSVN) lie on the Cytoplasmic side of the membrane. Residues 331–351 (IGAFNLGNALGAAAGGAVISA) traverse the membrane as a helical segment. Residues 352-356 (GLGYS) lie on the Periplasmic side of the membrane. A helical transmembrane segment spans residues 357 to 377 (FVPVMGAIVAGLALLLVFMSA). At 378-389 (RKQPETVCVANS) the chain is on the cytoplasmic side.

This sequence belongs to the major facilitator superfamily.

The protein localises to the cell inner membrane. This is Inner membrane transport protein YdhP (ydhP) from Escherichia coli O157:H7.